The primary structure comprises 322 residues: NADH-quinone oxidoreductase subunit H (322 aa).

Helical transmembrane passes span 12–32 (VGKALIVLVGIVGAGAFMSFI), 79–99 (IFILAPIIAFTAFILAFAVVP), 111–131 (VGLLYILAIAGLAVYAVLFAG), 151–171 (LSYEVFLGLSLMGIVIQTGSF), 183–203 (LWNVVPQILGFITFLFAGVAV), 234–254 (FFVGEYIGIVLISSLIVTLFF), 262–282 (LPPFIWFALKTACFMVFFILL), and 301–321 (VCLPLTLVNMLITGAVVLINV).

It belongs to the complex I subunit 1 family. NDH-1 is composed of 14 different subunits. Subunits NuoA, H, J, K, L, M, N constitute the membrane sector of the complex.

Its subcellular location is the cell inner membrane. The enzyme catalyses a quinone + NADH + 5 H(+)(in) = a quinol + NAD(+) + 4 H(+)(out). NDH-1 shuttles electrons from NADH, via FMN and iron-sulfur (Fe-S) centers, to quinones in the respiratory chain. The immediate electron acceptor for the enzyme in this species is believed to be ubiquinone. Couples the redox reaction to proton translocation (for every two electrons transferred, four hydrogen ions are translocated across the cytoplasmic membrane), and thus conserves the redox energy in a proton gradient. This subunit may bind ubiquinone. The sequence is that of NADH-quinone oxidoreductase subunit H from Aeromonas salmonicida (strain A449).